A 491-amino-acid polypeptide reads, in one-letter code: Protein nucleotidyltransferase YdiU (491 aa).

Positions 94, 96, 97, 117, 129, 130, 180, and 187 each coordinate ATP. Asp-256 (proton acceptor) is an active-site residue. The Mg(2+) site is built by Asn-257 and Asp-266. Asp-266 serves as a coordination point for ATP.

It belongs to the SELO family. Mg(2+) is required as a cofactor. Requires Mn(2+) as cofactor.

The catalysed reaction is L-seryl-[protein] + ATP = 3-O-(5'-adenylyl)-L-seryl-[protein] + diphosphate. It carries out the reaction L-threonyl-[protein] + ATP = 3-O-(5'-adenylyl)-L-threonyl-[protein] + diphosphate. The enzyme catalyses L-tyrosyl-[protein] + ATP = O-(5'-adenylyl)-L-tyrosyl-[protein] + diphosphate. It catalyses the reaction L-histidyl-[protein] + UTP = N(tele)-(5'-uridylyl)-L-histidyl-[protein] + diphosphate. The catalysed reaction is L-seryl-[protein] + UTP = O-(5'-uridylyl)-L-seryl-[protein] + diphosphate. It carries out the reaction L-tyrosyl-[protein] + UTP = O-(5'-uridylyl)-L-tyrosyl-[protein] + diphosphate. Functionally, nucleotidyltransferase involved in the post-translational modification of proteins. It can catalyze the addition of adenosine monophosphate (AMP) or uridine monophosphate (UMP) to a protein, resulting in modifications known as AMPylation and UMPylation. This Clostridium botulinum (strain Okra / Type B1) protein is Protein nucleotidyltransferase YdiU.